A 338-amino-acid chain; its full sequence is Methionine synthase (338 aa).

The Zn(2+) site is built by histidine 210, cysteine 212, glutamate 234, and cysteine 294.

This sequence belongs to the archaeal MetE family. It depends on Zn(2+) as a cofactor.

It functions in the pathway amino-acid biosynthesis; L-methionine biosynthesis via de novo pathway. Catalyzes the transfer of a methyl group to L-homocysteine resulting in methionine formation. The physiological methyl donor is unknown. This Pyrococcus furiosus (strain ATCC 43587 / DSM 3638 / JCM 8422 / Vc1) protein is Methionine synthase.